A 348-amino-acid chain; its full sequence is Holliday junction branch migration complex subunit RuvB (348 aa).

The interval 4–186 (TDRIISANTA…FGIIQRLEFY (183 aa)) is large ATPase domain (RuvB-L). ATP is bound by residues Ile25, Arg26, Gly67, Lys70, Thr71, Thr72, 133 to 135 (EDY), Arg176, Tyr186, and Arg223. Thr71 serves as a coordination point for Mg(2+). Residues 187-257 (SIDDLSKIVY…IADKALSMLK (71 aa)) form a small ATPAse domain (RuvB-S) region. The segment at 260-348 (PVGFDHMDHR…SADQQQTLSI (89 aa)) is head domain (RuvB-H). DNA is bound by residues Arg315 and Arg320.

It belongs to the RuvB family. Homohexamer. Forms an RuvA(8)-RuvB(12)-Holliday junction (HJ) complex. HJ DNA is sandwiched between 2 RuvA tetramers; dsDNA enters through RuvA and exits via RuvB. An RuvB hexamer assembles on each DNA strand where it exits the tetramer. Each RuvB hexamer is contacted by two RuvA subunits (via domain III) on 2 adjacent RuvB subunits; this complex drives branch migration. In the full resolvosome a probable DNA-RuvA(4)-RuvB(12)-RuvC(2) complex forms which resolves the HJ.

The protein localises to the cytoplasm. It carries out the reaction ATP + H2O = ADP + phosphate + H(+). The RuvA-RuvB-RuvC complex processes Holliday junction (HJ) DNA during genetic recombination and DNA repair, while the RuvA-RuvB complex plays an important role in the rescue of blocked DNA replication forks via replication fork reversal (RFR). RuvA specifically binds to HJ cruciform DNA, conferring on it an open structure. The RuvB hexamer acts as an ATP-dependent pump, pulling dsDNA into and through the RuvAB complex. RuvB forms 2 homohexamers on either side of HJ DNA bound by 1 or 2 RuvA tetramers; 4 subunits per hexamer contact DNA at a time. Coordinated motions by a converter formed by DNA-disengaged RuvB subunits stimulates ATP hydrolysis and nucleotide exchange. Immobilization of the converter enables RuvB to convert the ATP-contained energy into a lever motion, pulling 2 nucleotides of DNA out of the RuvA tetramer per ATP hydrolyzed, thus driving DNA branch migration. The RuvB motors rotate together with the DNA substrate, which together with the progressing nucleotide cycle form the mechanistic basis for DNA recombination by continuous HJ branch migration. Branch migration allows RuvC to scan DNA until it finds its consensus sequence, where it cleaves and resolves cruciform DNA. The protein is Holliday junction branch migration complex subunit RuvB of Francisella tularensis subsp. tularensis (strain FSC 198).